We begin with the raw amino-acid sequence, 214 residues long: Adenylate kinase (214 aa).

Glycine 10 to threonine 15 lines the ATP pocket. Positions serine 30 to valine 59 are NMP. AMP is bound by residues threonine 31, arginine 36, glutamine 57–valine 59, glycine 85–arginine 88, and glutamine 92. Positions glycine 122–aspartate 159 are LID. Residues arginine 123 and valine 132 to tyrosine 133 contribute to the ATP site. AMP is bound by residues arginine 156 and arginine 167. Residue glutamine 200 coordinates ATP.

Belongs to the adenylate kinase family. Monomer.

It localises to the cytoplasm. It catalyses the reaction AMP + ATP = 2 ADP. It functions in the pathway purine metabolism; AMP biosynthesis via salvage pathway; AMP from ADP: step 1/1. Catalyzes the reversible transfer of the terminal phosphate group between ATP and AMP. Plays an important role in cellular energy homeostasis and in adenine nucleotide metabolism. In Shewanella denitrificans (strain OS217 / ATCC BAA-1090 / DSM 15013), this protein is Adenylate kinase.